Here is a 130-residue protein sequence, read N- to C-terminus: Small ribosomal subunit protein uS8 (130 aa).

Belongs to the universal ribosomal protein uS8 family. In terms of assembly, part of the 30S ribosomal subunit.

Functionally, one of the primary rRNA binding proteins, it binds directly to 16S rRNA central domain where it helps coordinate assembly of the platform of the 30S subunit. The sequence is that of Small ribosomal subunit protein uS8 from Pyrococcus horikoshii (strain ATCC 700860 / DSM 12428 / JCM 9974 / NBRC 100139 / OT-3).